The primary structure comprises 185 residues: Somatotropin (185 aa).

A disulfide bridge links cysteine 52 with cysteine 158. A Zn(2+)-binding site is contributed by glutamate 167. Cysteine 175 and cysteine 183 are disulfide-bonded.

It belongs to the somatotropin/prolactin family.

It is found in the secreted. Functionally, growth hormone plays an important role in growth control and is involved in the regulation of several anabolic processes. Implicated as an osmoregulatory substance important for seawater adaptation. This chain is Somatotropin (gh), found in Katsuwonus pelamis (Skipjack tuna).